A 173-amino-acid polypeptide reads, in one-letter code: RNA polymerase sigma factor TcsR (173 aa).

A sigma-70 factor domain-4 region spans residues 122-169; the sequence is IKDLTQNEKNILRKIYLHGLRESEISRELNISRQAVNKTHLRALEKLK. A DNA-binding region (H-T-H motif) is located at residues 143-162; sequence ESEISRELNISRQAVNKTHL.

It belongs to the sigma-70 factor family.

Sigma factors are initiation factors that promote the attachment of RNA polymerase to specific initiation sites and are then released. Transcriptional regulator specifically required to activate expression of the toxin gene locus, composed of tcsL and tcdE/utxA. This is RNA polymerase sigma factor TcsR from Paraclostridium sordellii (Clostridium sordellii).